Here is a 529-residue protein sequence, read N- to C-terminus: uncharacterized protein (529 aa).

The helical transmembrane segment at 354 to 373 threads the bilayer; the sequence is FHVASFPWISWAILGSYIML.

It localises to the host membrane. This is an uncharacterized protein from Acidianus convivator (ATV).